We begin with the raw amino-acid sequence, 1690 residues long: DNA-directed RNA polymerase subunit beta' (1690 aa).

The Zn(2+) site is built by cysteine 63, cysteine 65, cysteine 78, and cysteine 81. Residues aspartate 753, aspartate 755, and aspartate 757 each contribute to the Mg(2+) site. The Zn(2+) site is built by cysteine 1107, cysteine 1295, cysteine 1302, and cysteine 1305.

Belongs to the RNA polymerase beta' chain family. The RNAP catalytic core consists of 2 alpha, 1 beta, 1 beta' and 1 omega subunit. When a sigma factor is associated with the core the holoenzyme is formed, which can initiate transcription. It depends on Mg(2+) as a cofactor. Zn(2+) serves as cofactor.

It carries out the reaction RNA(n) + a ribonucleoside 5'-triphosphate = RNA(n+1) + diphosphate. DNA-dependent RNA polymerase catalyzes the transcription of DNA into RNA using the four ribonucleoside triphosphates as substrates. This Thermotoga neapolitana (strain ATCC 49049 / DSM 4359 / NBRC 107923 / NS-E) protein is DNA-directed RNA polymerase subunit beta'.